Consider the following 228-residue polypeptide: uncharacterized protein (228 aa).

An N-terminal signal peptide occupies residues 1 to 15 (MKQKYLFIASMALAG). The N-palmitoyl cysteine moiety is linked to residue Cys16. A lipid anchor (S-diacylglycerol cysteine) is attached at Cys16.

This sequence to P.multocida PM0015.

Its subcellular location is the cell membrane. This is an uncharacterized protein from Pasteurella multocida (strain Pm70).